The primary structure comprises 301 residues: ATP synthase gamma chain (301 aa).

The protein belongs to the ATPase gamma chain family. In terms of assembly, F-type ATPases have 2 components, CF(1) - the catalytic core - and CF(0) - the membrane proton channel. CF(1) has five subunits: alpha(3), beta(3), gamma(1), delta(1), epsilon(1). CF(0) has three main subunits: a, b and c.

It is found in the cell inner membrane. In terms of biological role, produces ATP from ADP in the presence of a proton gradient across the membrane. The gamma chain is believed to be important in regulating ATPase activity and the flow of protons through the CF(0) complex. In Bordetella bronchiseptica (strain ATCC BAA-588 / NCTC 13252 / RB50) (Alcaligenes bronchisepticus), this protein is ATP synthase gamma chain.